The chain runs to 469 residues: GDP-fucose protein O-fucosyltransferase 2 (469 aa).

The signal sequence occupies residues 1–18 (MKFIIVLLLFFFFKVIDR). Residues 56-60 (GEGFN), 277-279 (HLR), and 373-374 (RF) contribute to the GDP-beta-L-fucose site. Glu57 (proton acceptor) is an active-site residue.

This sequence belongs to the glycosyltransferase 68 family.

The protein resides in the endoplasmic reticulum. The catalysed reaction is L-seryl-[protein] + GDP-beta-L-fucose = 3-O-(alpha-L-fucosyl)-L-seryl-[protein] + GDP + H(+). It catalyses the reaction L-threonyl-[protein] + GDP-beta-L-fucose = 3-O-(alpha-L-fucosyl)-L-threonyl-[protein] + GDP + H(+). The protein operates within protein modification; protein glycosylation. Catalyzes the reaction that attaches fucose through an O-glycosidic linkage to a conserved serine or threonine residue in the consensus sequence C1-X-X-S/T-C2 of thrombospondin type I repeats (TSRs) where C1 and C2 are the first and second cysteines of the repeat, respectively. O-fucosylates sporozoite proteins CSP and TRAP. O-fucosylation regulates stability and intracellular trafficking of TRAP but not of CSP. Probably by regulating protein O-fucosylation, may play a role in parasite transmission to the mosquito vector and/or infection of the vertebrate host hepatocytes; however, POFUT2 involvement in transmission/infection is controversial. In Plasmodium falciparum (isolate NF54), this protein is GDP-fucose protein O-fucosyltransferase 2.